The primary structure comprises 531 residues: SWI/SNF-related matrix-associated actin-dependent regulator of chromatin subfamily D member 2 (531 aa).

An asymmetric dimethylarginine mark is found at R81 and R104. The residue at position 203 (S203) is a Phosphoserine. The segment at 205–226 (SKAEGDSAGTAGTPGGTPAGDK) is disordered. Phosphothreonine is present on T217. K226 participates in a covalent cross-link: Glycyl lysine isopeptide (Lys-Gly) (interchain with G-Cter in SUMO2). The SWIB/MDM2 domain occupies 306 to 383 (HQPPQYKLDP…PMKLAGLLQH (78 aa)).

The protein belongs to the SMARCD family. In terms of assembly, component of the multiprotein chromatin-remodeling complexes SWI/SNF: SWI/SNF-A (BAF), SWI/SNF-B (PBAF) and related complexes. The canonical complex contains a catalytic subunit (either SMARCA4/BRG1/BAF190A or SMARCA2/BRM/BAF190B), and at least SMARCE1, ACTL6A/BAF53, SMARCC1/BAF155, SMARCC2/BAF170, and SMARCB1/SNF5/BAF47. Other subunits specific to each of the complexes may also be present permitting several possible combinations developmentally and tissue specific. Component of the BAF complex, which includes at least actin (ACTB), ARID1A/BAF250A, ARID1B/BAF250B, SMARCA2/BRM, SMARCA4/BRG1, ACTL6A/BAF53, ACTL6B/BAF53B, SMARCE1/BAF57, SMARCC1/BAF155, SMARCC2/BAF170, SMARCB1/SNF5/INI1, and one or more SMARCD1/BAF60A, SMARCD2/BAF60B, or SMARCD3/BAF60C. In muscle cells, the BAF complex also contains DPF3. Component of the SWI/SNF-B (PBAF) chromatin remodeling complex, at least composed of SMARCA4/BRG1, SMARCB1/BAF47/SNF5, ACTL6A/BAF53A or ACTL6B/BAF53B, SMARCE1/BAF57, SMARCD1/BAF60A, SMARCD2/BAF60B, perhaps SMARCD3/BAF60C, SMARCC1/BAF155, SMARCC2/BAF170, PBRM1/BAF180, ARID2/BAF200 and actin (ACTB). Interacts with UNKL. Interacts with CEBPE. Post-translationally, ubiquitinated through a signaling process involving RAC1 and the RING finger protein UNKL. In terms of tissue distribution, isoform 2 is expressed in the pancreas.

It localises to the nucleus. Its function is as follows. Involved in transcriptional activation and repression of select genes by chromatin remodeling (alteration of DNA-nucleosome topology). Component of SWI/SNF chromatin remodeling complexes that carry out key enzymatic activities, changing chromatin structure by altering DNA-histone contacts within a nucleosome in an ATP-dependent manner. Critical regulator of myeloid differentiation, controlling granulocytopoiesis and the expression of genes involved in neutrophil granule formation. The chain is SWI/SNF-related matrix-associated actin-dependent regulator of chromatin subfamily D member 2 (SMARCD2) from Homo sapiens (Human).